The chain runs to 24 residues: Homotarsinin (24 aa).

R24 bears the Arginine amide mark.

In terms of assembly, homodimer; disulfide-linked. In terms of tissue distribution, expressed by the skin glands.

The protein localises to the secreted. Its function is as follows. Antimicrobial peptide. Active against Gram-negative bacteria E.coli ATCC 25922 (MIC=1.5 uM) and P.aeruginosa ATTC 27853 (MIC=23.2 uM) and against Gram-positive bacterium S.aureus ATCC 29313 (MIC=11.6 uM). Has no hemolytic activity. Associates with and disrupts membranes in vitro. This chain is Homotarsinin, found in Phyllomedusa tarsius (Brownbelly leaf frog).